Reading from the N-terminus, the 218-residue chain is Protein GrpE (218 aa).

The disordered stretch occupies residues 1–75 (MTTPNGMPDN…DVDPDLDGDG (75 aa)). Basic and acidic residues predominate over residues 23 to 40 (SADRAEQAAEEAAARQAE). Acidic residues predominate over residues 48–75 (SEEEISPELEAEINDLLSDVDPDLDGDG).

It belongs to the GrpE family. As to quaternary structure, homodimer.

The protein resides in the cytoplasm. In terms of biological role, participates actively in the response to hyperosmotic and heat shock by preventing the aggregation of stress-denatured proteins, in association with DnaK and GrpE. It is the nucleotide exchange factor for DnaK and may function as a thermosensor. Unfolded proteins bind initially to DnaJ; upon interaction with the DnaJ-bound protein, DnaK hydrolyzes its bound ATP, resulting in the formation of a stable complex. GrpE releases ADP from DnaK; ATP binding to DnaK triggers the release of the substrate protein, thus completing the reaction cycle. Several rounds of ATP-dependent interactions between DnaJ, DnaK and GrpE are required for fully efficient folding. The chain is Protein GrpE from Corynebacterium glutamicum (strain ATCC 13032 / DSM 20300 / JCM 1318 / BCRC 11384 / CCUG 27702 / LMG 3730 / NBRC 12168 / NCIMB 10025 / NRRL B-2784 / 534).